Reading from the N-terminus, the 179-residue chain is Acireductone dioxygenase (179 aa).

The interval 1-23 is disordered; sequence MVQAWYMDESTADPRMPHRAQPD. 4 residues coordinate Fe(2+): His88, His90, Glu94, and His133. Ni(2+) is bound by residues His88, His90, Glu94, and His133.

This sequence belongs to the acireductone dioxygenase (ARD) family. In terms of assembly, monomer. Interacts with MMP14. It depends on Fe(2+) as a cofactor. Ni(2+) is required as a cofactor. As to expression, detected in prostate, liver, heart, brain, muscle, kidney and seminal vesicles.

It localises to the cytoplasm. The protein resides in the nucleus. It is found in the cell membrane. It carries out the reaction 1,2-dihydroxy-5-(methylsulfanyl)pent-1-en-3-one + O2 = 4-methylsulfanyl-2-oxobutanoate + formate + 2 H(+). It catalyses the reaction 1,2-dihydroxy-5-(methylsulfanyl)pent-1-en-3-one + O2 = 3-(methylsulfanyl)propanoate + CO + formate + 2 H(+). It participates in amino-acid biosynthesis; L-methionine biosynthesis via salvage pathway; L-methionine from S-methyl-5-thio-alpha-D-ribose 1-phosphate: step 5/6. Functionally, catalyzes 2 different reactions between oxygen and the acireductone 1,2-dihydroxy-3-keto-5-methylthiopentene (DHK-MTPene) depending upon the metal bound in the active site. Fe-containing acireductone dioxygenase (Fe-ARD) produces formate and 2-keto-4-methylthiobutyrate (KMTB), the alpha-ketoacid precursor of methionine in the methionine recycle pathway. Ni-containing acireductone dioxygenase (Ni-ARD) produces methylthiopropionate, carbon monoxide and formate, and does not lie on the methionine recycle pathway. Also down-regulates cell migration mediated by MMP14. This chain is Acireductone dioxygenase (Adi1), found in Rattus norvegicus (Rat).